We begin with the raw amino-acid sequence, 246 residues long: 1-(5-phosphoribosyl)-5-[(5-phosphoribosylamino)methylideneamino] imidazole-4-carboxamide isomerase (246 aa).

D8 acts as the Proton acceptor in catalysis. D131 (proton donor) is an active-site residue.

It belongs to the HisA/HisF family.

Its subcellular location is the cytoplasm. It catalyses the reaction 1-(5-phospho-beta-D-ribosyl)-5-[(5-phospho-beta-D-ribosylamino)methylideneamino]imidazole-4-carboxamide = 5-[(5-phospho-1-deoxy-D-ribulos-1-ylimino)methylamino]-1-(5-phospho-beta-D-ribosyl)imidazole-4-carboxamide. Its pathway is amino-acid biosynthesis; L-histidine biosynthesis; L-histidine from 5-phospho-alpha-D-ribose 1-diphosphate: step 4/9. The chain is 1-(5-phosphoribosyl)-5-[(5-phosphoribosylamino)methylideneamino] imidazole-4-carboxamide isomerase from Bordetella petrii (strain ATCC BAA-461 / DSM 12804 / CCUG 43448).